The sequence spans 376 residues: Ribonuclease D (376 aa).

The 169-residue stretch at 8-176 (IQWIRDDASL…VYLALDARLS (169 aa)) folds into the 3'-5' exonuclease domain. In terms of domain architecture, HRDC spans 214 to 294 (RPQQLAVLRE…AEAARLPQSE (81 aa)).

This sequence belongs to the RNase D family. A divalent metal cation is required as a cofactor.

The protein localises to the cytoplasm. It catalyses the reaction Exonucleolytic cleavage that removes extra residues from the 3'-terminus of tRNA to produce 5'-mononucleotides.. Functionally, exonuclease involved in the 3' processing of various precursor tRNAs. Initiates hydrolysis at the 3'-terminus of an RNA molecule and releases 5'-mononucleotides. The polypeptide is Ribonuclease D (Pseudomonas paraeruginosa (strain DSM 24068 / PA7) (Pseudomonas aeruginosa (strain PA7))).